A 324-amino-acid chain; its full sequence is Annexin A10 (324 aa).

4 Annexin repeats span residues 17–88, 89–160, 171–243, and 247–318; these read FNPI…GLMY, PPPL…NLVQ, AMAA…AIVL, and DKPA…AICA.

This sequence belongs to the annexin family.

The polypeptide is Annexin A10 (ANXA10) (Homo sapiens (Human)).